The following is a 197-amino-acid chain: uncharacterized protein (197 aa).

The protein belongs to the methyltransferase superfamily.

This is an uncharacterized protein from Mycobacterium bovis (strain ATCC BAA-935 / AF2122/97).